The sequence spans 481 residues: Dihydrolipoyl dehydrogenase (481 aa).

FAD is bound by residues E34–C42 and K51. C42 and C47 are disulfide-bonded. Residues G195–I199, E218, and A284–V287 contribute to the NAD(+) site. Residues D326 and A334 each contribute to the FAD site. Residue H460 is the Proton acceptor of the active site.

It belongs to the class-I pyridine nucleotide-disulfide oxidoreductase family. In terms of assembly, homodimer. Requires FAD as cofactor.

It localises to the cytoplasm. The catalysed reaction is N(6)-[(R)-dihydrolipoyl]-L-lysyl-[protein] + NAD(+) = N(6)-[(R)-lipoyl]-L-lysyl-[protein] + NADH + H(+). Its function is as follows. Lipoamide dehydrogenase is a component of the alpha-ketoacid dehydrogenase complexes. This chain is Dihydrolipoyl dehydrogenase (lpdA), found in Rhizobium etli (strain ATCC 51251 / DSM 11541 / JCM 21823 / NBRC 15573 / CFN 42).